A 442-amino-acid chain; its full sequence is tRNA-2-methylthio-N(6)-dimethylallyladenosine synthase (442 aa).

One can recognise an MTTase N-terminal domain in the interval 5–122; the sequence is KKVFIKTLGC…LPEMIKQKQK (118 aa). Positions 14, 51, 85, 159, 163, and 166 each coordinate [4Fe-4S] cluster. In terms of domain architecture, Radical SAM core spans 145–378; sequence KAEGAKAYVS…DLLNSNAQII (234 aa). In terms of domain architecture, TRAM spans 380–442; that stretch reads RQMVGTNQRI…LPNSLRGELI (63 aa).

This sequence belongs to the methylthiotransferase family. MiaB subfamily. Monomer. Requires [4Fe-4S] cluster as cofactor.

The protein localises to the cytoplasm. The enzyme catalyses N(6)-dimethylallyladenosine(37) in tRNA + (sulfur carrier)-SH + AH2 + 2 S-adenosyl-L-methionine = 2-methylsulfanyl-N(6)-dimethylallyladenosine(37) in tRNA + (sulfur carrier)-H + 5'-deoxyadenosine + L-methionine + A + S-adenosyl-L-homocysteine + 2 H(+). Its function is as follows. Catalyzes the methylthiolation of N6-(dimethylallyl)adenosine (i(6)A), leading to the formation of 2-methylthio-N6-(dimethylallyl)adenosine (ms(2)i(6)A) at position 37 in tRNAs that read codons beginning with uridine. In Francisella tularensis subsp. tularensis (strain FSC 198), this protein is tRNA-2-methylthio-N(6)-dimethylallyladenosine synthase.